An 843-amino-acid polypeptide reads, in one-letter code: Axin-2 (843 aa).

The interval 1–75 (MSSAMLVTCL…EGRASPDSPL (75 aa)) is disordered. The Tankyrase-binding motif motif lies at 21 to 30 (APRPPVPGEE). Positions 56-69 (RRNEDGLGEPEGRA) are enriched in basic and acidic residues. Residues 81 to 200 (SLHSLLGDQD…LTSDIYLEYV (120 aa)) form the RGS domain. Residues 327 to 413 (VGSKKQLQRE…REGSELTLNS (87 aa)) are interaction with GSK3B. The tract at residues 334-393 (QREMHRSVKANGQVSLPHFPRTHRLPKEMTPVEPATFAAELISRLEKLKLELESRHSLEE) is interaction with SIAH1 and SIAH2. Disordered stretches follow at residues 396-435 (QQIR…EEDP), 447-494 (LKTP…AASP), 561-674 (APET…RTTP), and 718-748 (ASQQ…EDHK). The interval 413-476 (SREGAPTQHP…PDHHHHHHSQ (64 aa)) is interaction with beta-catenin. Composition is skewed to low complexity over residues 477-494 (YHSL…AASP) and 588-597 (PGLALPAREG). Over residues 727 to 741 (SATVQTGATPFSNPS) the composition is skewed to polar residues. The DIX domain maps to 761 to 843 (ASELVVTYFF…RILGKVERID (83 aa)).

In terms of assembly, interacts with glycogen synthase kinase-3 beta (GSK3B) and beta-catenin. The interaction between axin and beta-catenin occurs via the armadillo repeats contained in beta-catenin. Interacts with SMAD7 and RNF111. Interacts with ANKRD6. Interacts with SIAH1. Interacts with SIAH2. Post-translationally, probably phosphorylated by GSK3B and dephosphorylated by PP2A. In terms of processing, ADP-ribosylated by tankyrase TNKS and TNKS2. Poly-ADP-ribosylated protein is recognized by RNF146, followed by ubiquitination and subsequent activation of the Wnt signaling pathway. Ubiquitinated by RNF146 when poly-ADP-ribosylated, leading to its degradation and subsequent activation of the Wnt signaling pathway. Deubiquitinated by USP34, deubiquitinated downstream of beta-catenin stabilization step: deubiquitination is important Wnt signaling to positively regulate beta-catenin (CTNBB1)-mediated transcription. As to expression, expressed in brain and lymphoblast.

Its subcellular location is the cytoplasm. Functionally, inhibitor of the Wnt signaling pathway. Down-regulates beta-catenin. Probably facilitate the phosphorylation of beta-catenin and APC by GSK3B. This Homo sapiens (Human) protein is Axin-2 (AXIN2).